Consider the following 306-residue polypeptide: Plant-type L-asparaginase (306 aa).

The active-site Nucleophile is the Thr176. Substrate contacts are provided by residues 203–206 (RVGD) and 225–228 (TGLG).

This sequence belongs to the Ntn-hydrolase family. In terms of assembly, heterotetramer of two alpha and two beta chains arranged as a dimer of alpha/beta heterodimers. The uncleaved protein forms homodimers. In terms of processing, autocleaved. Generates the alpha and beta subunits. The N-terminal residue of the beta subunit is thought to be responsible for the nucleophile hydrolase activity. Predominantly produced in the uncleaved form when gene expression is induced at 37 degrees Celsius with 0.5 mM IPTG. When produced at 42 degrees Celsius without adding IPTG, approximately 90% of the protein is found in the cleaved form, while the remaining 10% is observed as uncleaved precursor. Undergoes complete auto-cleavage within 24 hours at 37 degrees Celsius.

The enzyme catalyses L-asparagine + H2O = L-aspartate + NH4(+). Its activity is regulated as follows. Undergoes auto-cleavage in a temperature-dependent and glycine-independent manner. Metal ions and EDTA do not have any significant effect on enzyme activity, indicating that activity is metal-independent. In terms of biological role, catalyzes the hydrolysis of L-asparagine into L-aspartate and ammonia. Also displays D-asparaginase activity, which is about 10% of the L-asparaginase activity. Does not exhibit glutaminase activity. The chain is Plant-type L-asparaginase from Thermococcus kodakarensis (strain ATCC BAA-918 / JCM 12380 / KOD1) (Pyrococcus kodakaraensis (strain KOD1)).